We begin with the raw amino-acid sequence, 50 residues long: C-C motif chemokine 5 (50 aa).

Belongs to the intercrine beta (chemokine CC) family.

It localises to the secreted. Functionally, chemoattractant for blood monocytes, memory T-helper cells and eosinophils. Causes the release of histamine from basophils and activates eosinophils. May activate several chemokine receptors including CCR1, CCR3, CCR4 and CCR5. May also be an agonist of the G protein-coupled receptor GPR75. Together with GPR75, may play a role in neuron survival through activation of a downstream signaling pathway involving the PI3, Akt and MAP kinases. By activating GPR75 may also play a role in insulin secretion by islet cells. The sequence is that of C-C motif chemokine 5 (CCL5) from Sus scrofa (Pig).